The chain runs to 440 residues: Xylose isomerase (440 aa).

Catalysis depends on residues His-101 and Asp-104. Residues Glu-232, Glu-268, His-271, Asp-296, Asp-307, Asp-309, and Asp-339 each contribute to the Mg(2+) site.

Belongs to the xylose isomerase family. Homotetramer. The cofactor is Mg(2+).

It is found in the cytoplasm. It carries out the reaction alpha-D-xylose = alpha-D-xylulofuranose. This chain is Xylose isomerase, found in Escherichia fergusonii (strain ATCC 35469 / DSM 13698 / CCUG 18766 / IAM 14443 / JCM 21226 / LMG 7866 / NBRC 102419 / NCTC 12128 / CDC 0568-73).